The sequence spans 199 residues: MLRFVVLSLTLMVFINSSNFPKTAATPPGTYQNHTTYVKTACNSTTYPTMCYNCLSSYSSTIKSDPIKLCTTSLNLNVKSAKNATLVVSNLLQKAKAAKSHEVSILKDCVDEMKDTIDELKQAVAEMKYVRGGGKTTEEHLKNVKTWVSSALTDEGTCTDGFEEGRVNVETKKKVKKAISELSKTTSNTLALLTHYLSY.

A signal peptide spans 1-25 (MLRFVVLSLTLMVFINSSNFPKTAA). N-linked (GlcNAc...) asparagine glycosylation is found at asparagine 16, asparagine 33, asparagine 43, and asparagine 83. A disulfide bridge links cysteine 42 with cysteine 51. The cysteines at positions 109 and 158 are disulfide-linked.

This sequence belongs to the PMEI family. As to quaternary structure, binds reversibly to PME3 to inhibit its activity; the stability of the PME3-PMEI4 complex and the inhibition of the pectin methylesterase (PME) activity is pH-dependent, based on protonation status of amino-acids at the complex interface. As to expression, expressed in outer cell layer of roots, particularly in the root-hair zone. Expressed in roots and siliques.

It is found in the secreted. It localises to the extracellular space. The protein resides in the apoplast. Functionally, pectin methylesterase (PME) inhibitor that can target the root-expressed PME17 and PME3 in a pH-dependent manner, mainly in slightly acidic conditions (pH 6.3 and 5.0) but not at pH 7.5; this processus relies on changes in the protonation of amino acids involved in intermolecular and intramolecular interactions. Regulate de-methylesterification of pectins in roots and affects root growth. The sequence is that of Pectinesterase inhibitor 4 from Arabidopsis thaliana (Mouse-ear cress).